The chain runs to 247 residues: DNA polymerase sliding clamp (247 aa).

The protein belongs to the PCNA family. In terms of assembly, homotrimer. The subunits circularize to form a toroid; DNA passes through its center. Replication factor C (RFC) is required to load the toroid on the DNA.

Its function is as follows. Sliding clamp subunit that acts as a moving platform for DNA processing. Responsible for tethering the catalytic subunit of DNA polymerase and other proteins to DNA during high-speed replication. In Thermofilum pendens (strain DSM 2475 / Hrk 5), this protein is DNA polymerase sliding clamp.